The sequence spans 207 residues: MDKDCEMKRTTLDSPLGKLELSGCEQGLHEIKLLGKGTSAADAVEVPAPAAVLGGPEPLMQCTAWLNAYFHQPEAIEEFPVPALHHPVFQQESFTRQVLWKLLKVVKFGEVISYQQLAALAGNPKAARAVGGAMRGNPVPILIPCHRVVCSSGAVGNYSGGLAVKEWLLAHEGHRLGKPGLGGSSGLAGAWLKGAGATSGSPPAGRN.

C5 contacts Zn(2+). Residue S14 is modified to Phosphoserine. Zn(2+)-binding residues include C24, H29, and H85. The DNA site is built by T95, Y114, Q115, N123, and R128. Residue C145 is the Nucleophile; methyl group acceptor of the active site. S151 contacts DNA. Residue S201 is modified to Phosphoserine.

Belongs to the MGMT family. It depends on Zn(2+) as a cofactor.

It localises to the nucleus. It catalyses the reaction a 6-O-methyl-2'-deoxyguanosine in DNA + L-cysteinyl-[protein] = S-methyl-L-cysteinyl-[protein] + a 2'-deoxyguanosine in DNA. The enzyme catalyses a 4-O-methyl-thymidine in DNA + L-cysteinyl-[protein] = a thymidine in DNA + S-methyl-L-cysteinyl-[protein]. Its function is as follows. Involved in the cellular defense against the biological effects of O6-methylguanine (O6-MeG) and O4-methylthymine (O4-MeT) in DNA. Repairs the methylated nucleobase in DNA by stoichiometrically transferring the methyl group to a cysteine residue in the enzyme. This is a suicide reaction: the enzyme is irreversibly inactivated. The protein is Methylated-DNA--protein-cysteine methyltransferase (MGMT) of Homo sapiens (Human).